A 271-amino-acid polypeptide reads, in one-letter code: Orotidine 5'-phosphate decarboxylase (271 aa).

Lys-95 (proton donor) is an active-site residue.

It belongs to the OMP decarboxylase family. Type 2 subfamily.

It carries out the reaction orotidine 5'-phosphate + H(+) = UMP + CO2. It participates in pyrimidine metabolism; UMP biosynthesis via de novo pathway; UMP from orotate: step 2/2. This Janthinobacterium sp. (strain Marseille) (Minibacterium massiliensis) protein is Orotidine 5'-phosphate decarboxylase.